The sequence spans 199 residues: Cilia- and flagella-associated protein 20 (199 aa).

Belongs to the CFAP20 family. Expressed in spermatocytes and chordotonal organs in sensory neurons of the antenna.

The protein resides in the nucleus. It localises to the nucleolus. It is found in the cell projection. The protein localises to the cilium. Its subcellular location is the cytoplasm. The protein resides in the cytoskeleton. It localises to the microtubule organizing center. It is found in the centrosome. The protein localises to the centriole. Its subcellular location is the flagellum. The protein resides in the cilium axoneme. Cilium- and flagellum-specific protein that plays a role in axonemal structure organization and motility. Microtubule inner protein (MIP) part of the dynein-decorated doublet microtubules (DMTs) in cilia axoneme, which is required for motile cilia beating. Involved in the regulation of the size and morphology of cilia. Required for sperm individualization, differentiation of the sperm flagellum and tubulin polyglycylation of axonemal microtubules. This is Cilia- and flagella-associated protein 20 from Drosophila melanogaster (Fruit fly).